Reading from the N-terminus, the 550-residue chain is MSPSSTTTCTSLLEELQMIWDEIGESYNERDKMLLELEQECLDIYNKKVEKTRKFRAELQRSLAQAEAEIASLMSALGEKVSFAKKEGSLKEQISSVKPVLEDLLMKKDRRRKELSETLNQIAEITSNIAGNDYTVSSGSEVDESDLTQRKLDELRADLQDLRNEKAVRLQKVNSYISAVHELSEILSFDFSKALNSVHSSLTEFSKTHSKSISNDTLARFTELVKSLKAEKHERLLKLQGLGRSMQELWNLMETPMDERRRFDHCSSLLSSLPDDALKKGCLSLDIIREAEDEVRRLNSLKSSKMKELVFKRQCELEEICRGNHMDINSDAARKSLVELIESGDGDLSDILASIDGQIEKAREEALSRKEILDKVDKWRHAKEEETWLDDYEKDENRFSAVRGAHKNLKRAEKARSLISKIPAMVDVLTTKVKAWEKERGVPFLCDKQPLLQTLEDDIVIRAQREEEKRQFREQKRLQGQLATEKEAKYGSKSAKKKPLGQSLNTDNVTKTPIGRRIGNTPGRSVTSGGKDYRGNAVIPLNYVALQKDD.

2 coiled-coil regions span residues asparagine 46 to asparagine 174 and isoleucine 288 to valine 310. The tract at residues glutamine 471 to lysine 531 is disordered. Positions glutamine 502–lysine 511 are enriched in polar residues.

Belongs to the MAP65/ASE1 family. As to quaternary structure, forms a dimer. Binds to MT, mostly with coaligned MT, both between parallel or antiparallel, forming thick bundles. Bundles polymerized MT via the formation of 25-nm crossbridges with cortical MT.

It is found in the nucleus. Its subcellular location is the cytoplasm. It localises to the cytoskeleton. The protein localises to the spindle. The protein resides in the phragmoplast. It is found in the cell cortex. Its subcellular location is the cell junction. It localises to the plasmodesma. Functionally, microtubule-associated protein that bundle and stabilize adjacent microtubules (MT) of the cell cortex. Confers MT resistance to the drug oryzalin. Promotes the formation of a planar network of antiparallel microtubules. The polypeptide is 65-kDa microtubule-associated protein 5 (MAP65-5) (Arabidopsis thaliana (Mouse-ear cress)).